The chain runs to 149 residues: Transcriptional repressor NrdR (149 aa).

A zinc finger lies at 3–34; it reads CPFCSHSETQVVETRISEDGDSIRRRRQCASC. The ATP-cone domain maps to 49 to 139; sequence PAIVKKDGRR…VYRSFEDIDE (91 aa).

It belongs to the NrdR family. The cofactor is Zn(2+).

Functionally, negatively regulates transcription of bacterial ribonucleotide reductase nrd genes and operons by binding to NrdR-boxes. This is Transcriptional repressor NrdR from Albidiferax ferrireducens (strain ATCC BAA-621 / DSM 15236 / T118) (Rhodoferax ferrireducens).